A 185-amino-acid polypeptide reads, in one-letter code: Ribosome-recycling factor (185 aa).

This sequence belongs to the RRF family.

Its subcellular location is the cytoplasm. Functionally, responsible for the release of ribosomes from messenger RNA at the termination of protein biosynthesis. May increase the efficiency of translation by recycling ribosomes from one round of translation to another. The sequence is that of Ribosome-recycling factor from Pseudomonas fluorescens (strain ATCC BAA-477 / NRRL B-23932 / Pf-5).